We begin with the raw amino-acid sequence, 851 residues long: Transcriptional regulator RFX1 (851 aa).

Polar residues-rich tracts occupy residues 1-11 and 20-34; these read MSSDQTPQNRN and PRLQ…STGP. Disordered regions lie at residues 1–121, 134–170, and 195–230; these read MSSD…EPHP, QSQF…PQTY, and HEAS…TGEN. Positions 38 to 53 are enriched in basic and acidic residues; that stretch reads QQRERSQEQESDHEHQ. A compositionally biased stretch (low complexity) spans 54-84; that stretch reads QAQQHLHQFQQSNLTPSTTAFPSSTSIPTFS. Over residues 85–114 the composition is skewed to polar residues; the sequence is KQDQGYHNQFSSPQSSYRKIGNFAQSSNAP. The span at 141-170 shows a compositional bias: low complexity; sequence YSSPYIGQSQSQSQSQSQAQPQPHPQPQTY. Over residues 199–211 the composition is skewed to polar residues; that stretch reads SADNDSATNITTP. The RFX-type winged-helix DNA-binding region spans 282–357; it reads GMVWLLNSCD…YHYCGIKLTG (76 aa). Disordered stretches follow at residues 368–411 and 783–806; these read YQQK…SVSY and PPSL…TGTQ. Residues 384–393 are compositionally biased toward polar residues; sequence AQVGSSTSSA. A compositionally biased stretch (low complexity) spans 783–797; it reads PPSLSSLPQTQQQNP.

This sequence belongs to the RFX family.

The protein resides in the nucleus. Its function is as follows. Transcription factor involved in DNA damage responses, morphogenesis, and virulence. The polypeptide is Transcriptional regulator RFX1 (RFX1) (Candida albicans (strain SC5314 / ATCC MYA-2876) (Yeast)).